The chain runs to 190 residues: Adenine phosphoribosyltransferase (190 aa).

Belongs to the purine/pyrimidine phosphoribosyltransferase family. As to quaternary structure, homodimer.

It localises to the cytoplasm. It carries out the reaction AMP + diphosphate = 5-phospho-alpha-D-ribose 1-diphosphate + adenine. The protein operates within purine metabolism; AMP biosynthesis via salvage pathway; AMP from adenine: step 1/1. Functionally, catalyzes a salvage reaction resulting in the formation of AMP, that is energically less costly than de novo synthesis. The polypeptide is Adenine phosphoribosyltransferase (Cupriavidus pinatubonensis (strain JMP 134 / LMG 1197) (Cupriavidus necator (strain JMP 134))).